The following is a 95-amino-acid chain: Cell division topological specificity factor (95 aa).

Belongs to the MinE family.

Functionally, prevents the cell division inhibition by proteins MinC and MinD at internal division sites while permitting inhibition at polar sites. This ensures cell division at the proper site by restricting the formation of a division septum at the midpoint of the long axis of the cell. The protein is Cell division topological specificity factor of Methylorubrum extorquens (strain CM4 / NCIMB 13688) (Methylobacterium extorquens).